The sequence spans 962 residues: Protocadherin gamma-A4 (962 aa).

The tract at residues 1–24 is disordered; the sequence is MHFILDPEDPGAPQASTEGKPKHR. The signal sequence occupies residues 1–59; it reads MHFILDPEDPGAPQASTEGKPKHRRLRGGVVMAAPPARPDHTRLLQICLLLGVLVEIRA. Cadherin domains lie at 60-164, 165-273, 274-378, 379-483, 484-598, and 601-713; these read EQIL…PPSF, GTEQ…APVF, TQPE…APEV, TVTS…PPTF, PHAS…YPTF, and DGST…KPSA. At 60–723 the chain is on the extracellular side; sequence EQILYSVFEE…DPDDSGLTLY (664 aa). Residues N450 and N576 are each glycosylated (N-linked (GlcNAc...) asparagine). The chain crosses the membrane as a helical span at residues 724–744; that stretch reads LVVAVAAVSCVFLAFVTVLLA. Topologically, residues 745 to 962 are cytoplasmic; the sequence is LKLRRWHKSR…KKKSGKKEKK (218 aa). Disordered regions lie at residues 832-871 and 932-962; these read KGDP…WPNN and ATLT…KEKK. The segment covering 836 to 871 has biased composition (polar residues); the sequence is NLQQAPPNTDWRFSQAQRPGTSGSQNGDDTGTWPNN. Residues 952–962 are compositionally biased toward basic residues; sequence NKKKSGKKEKK.

It is found in the cell membrane. Functionally, potential calcium-dependent cell-adhesion protein. May be involved in the establishment and maintenance of specific neuronal connections in the brain. This Homo sapiens (Human) protein is Protocadherin gamma-A4 (PCDHGA4).